The following is a 462-amino-acid chain: Acetate--CoA ligase [ADP-forming] I subunit alpha (462 aa).

The protein belongs to the acetate CoA ligase alpha subunit family. As to quaternary structure, heterotetramer of two alpha and two beta subunits.

Its subcellular location is the cytoplasm. The enzyme catalyses acetate + ATP + CoA = acetyl-CoA + ADP + phosphate. Activity is dependent on magnesium. Its function is as follows. Catalyzes the reversible formation of acetate and ATP from acetyl-CoA by using ADP and phosphate. Can use other substrates such as isobutyryl-CoA, propionyl-CoA and butyryl-CoA, but not indoleacetyl-CoA, phenylacetyl-CoA or succinyl-CoA. Seems to be involved primarily in the conversion of acetyl-CoA to acetate. Participates in the degradation of branched-chain amino acids via branched-chain-acyl-CoA esters. This is Acetate--CoA ligase [ADP-forming] I subunit alpha from Pyrococcus furiosus (strain ATCC 43587 / DSM 3638 / JCM 8422 / Vc1).